Reading from the N-terminus, the 763-residue chain is Ethylene receptor 2 (763 aa).

Transmembrane regions (helical) follow at residues Phe-58–Ser-78, Ile-86–Phe-106, and Val-115–Ile-135. Cu cation-binding residues include Cys-97 and His-101. Positions Asp-190–Leu-339 constitute a GAF domain. Positions Ala-382–Leu-615 constitute a Histidine kinase domain. In terms of domain architecture, Response regulatory spans Gln-641–Leu-760. Residue Asp-692 is modified to 4-aspartylphosphate.

Belongs to the ethylene receptor family. Requires Cu cation as cofactor. As to expression, expressed in anthers and hulls.

The protein resides in the endoplasmic reticulum membrane. The catalysed reaction is ATP + protein L-histidine = ADP + protein N-phospho-L-histidine.. Ethylene receptor related to bacterial two-component regulators. Acts as a negative regulator of ethylene signaling. May delay the transition from the vegetative stage to the floral stage by up-regulating GI (GIGANTEA) and RCN1 and cause starch accumulation in stems by down-regulating the alpha-amylase AMY3D. In Oryza sativa subsp. indica (Rice), this protein is Ethylene receptor 2.